A 344-amino-acid chain; its full sequence is UDP-glucose 4-epimerase (344 aa).

Residues 15-17 (GYI), 36-40 (DNLSN), 63-64 (DI), Phe-85, and Lys-89 contribute to the NAD(+) site. 129–131 (SAT) provides a ligand contact to substrate. The Proton acceptor role is filled by Tyr-153. Positions 157 and 181 each coordinate NAD(+). Residues 181 to 183 (YFN), 202 to 204 (NNL), 220 to 222 (SIF), Arg-235, and 297 to 300 (RKGD) contribute to the substrate site.

It belongs to the NAD(P)-dependent epimerase/dehydratase family. In terms of assembly, homodimer. NAD(+) serves as cofactor.

It catalyses the reaction UDP-alpha-D-glucose = UDP-alpha-D-galactose. The catalysed reaction is UDP-N-acetyl-alpha-D-glucosamine = UDP-N-acetyl-alpha-D-galactosamine. It functions in the pathway carbohydrate metabolism; galactose metabolism. Functionally, catalyzes two distinct but analogous reactions: the reversible epimerization of UDP-glucose to UDP-galactose and the reversible epimerization of UDP-N-acetylglucosamine to UDP-N-acetylgalactosamine. The reaction with UDP-Gal plays a critical role in the Leloir pathway of galactose catabolism in which galactose is converted to the glycolytic intermediate glucose 6-phosphate. It contributes to the catabolism of dietary galactose and enables the endogenous biosynthesis of both UDP-Gal and UDP-GalNAc when exogenous sources are limited. Both UDP-sugar interconversions are important in the synthesis of glycoproteins and glycolipids. This chain is UDP-glucose 4-epimerase (galE), found in Dictyostelium discoideum (Social amoeba).